Here is a 260-residue protein sequence, read N- to C-terminus: Phosphate import ATP-binding protein PstB (260 aa).

The 242-residue stretch at 14-255 (IETENLNLFY…PKNTKTEEYI (242 aa)) folds into the ABC transporter domain. ATP is bound at residue 46 to 53 (GPSGCGKS).

It belongs to the ABC transporter superfamily. Phosphate importer (TC 3.A.1.7) family. In terms of assembly, the complex is composed of two ATP-binding proteins (PstB), two transmembrane proteins (PstC and PstA) and a solute-binding protein (PstS).

It localises to the cell inner membrane. The catalysed reaction is phosphate(out) + ATP + H2O = ADP + 2 phosphate(in) + H(+). In terms of biological role, part of the ABC transporter complex PstSACB involved in phosphate import. Responsible for energy coupling to the transport system. The sequence is that of Phosphate import ATP-binding protein PstB from Borreliella afzelii (strain PKo) (Borrelia afzelii).